The sequence spans 468 residues: Putative magnesium transporter MRS2-G (468 aa).

2 disordered regions span residues 1 to 76 (MGRR…AGKV) and 182 to 205 (NGQP…VPRL). 2 stretches are compositionally biased toward low complexity: residues 14–23 (ASNASTSSST) and 31–45 (RLPS…SSPS). Pro residues predominate over residues 46–67 (PASPSPPPPSASHPAPPSPPLA). The span at 187-197 (GDDHGEKHDDS) shows a compositional bias: basic and acidic residues. 2 consecutive transmembrane segments (helical) span residues 402 to 422 (LTLT…GAFA) and 437 to 457 (FFWP…IVLL).

The protein belongs to the CorA metal ion transporter (MIT) (TC 1.A.35.5) family.

Its subcellular location is the membrane. In terms of biological role, putative magnesium transporter. This chain is Putative magnesium transporter MRS2-G (MRS2-G), found in Oryza sativa subsp. indica (Rice).